The following is a 228-amino-acid chain: L-ribulose-5-phosphate 4-epimerase UlaF (228 aa).

Substrate is bound by residues 26-27 (GN), 43-44 (SG), and 72-73 (SS). Zn(2+) contacts are provided by D74, H93, and H95. Residue D118 is the Proton donor/acceptor of the active site. H167 provides a ligand contact to Zn(2+). The active-site Proton donor/acceptor is the Y225.

Belongs to the aldolase class II family. AraD/FucA subfamily. Zn(2+) is required as a cofactor.

It catalyses the reaction L-ribulose 5-phosphate = D-xylulose 5-phosphate. Its pathway is cofactor degradation; L-ascorbate degradation; D-xylulose 5-phosphate from L-ascorbate: step 4/4. Functionally, catalyzes the isomerization of L-ribulose 5-phosphate to D-xylulose 5-phosphate. Is involved in the anaerobic L-ascorbate utilization. The chain is L-ribulose-5-phosphate 4-epimerase UlaF from Escherichia coli (strain 55989 / EAEC).